The chain runs to 368 residues: Germination protease (368 aa).

Positions 1 to 16 are excised as a propeptide; that stretch reads MKNNELDVNQFLIRTD.

It belongs to the peptidase A25 family. In terms of assembly, homotetramer. Autoproteolytically processed. The inactive tetrameric zymogen termed p46 autoprocesses to a smaller form termed p41, which is active only during spore germination.

The catalysed reaction is Endopeptidase action with P4 Glu or Asp, P1 preferably Glu &gt; Asp, P1' hydrophobic and P2' Ala.. Initiates the rapid degradation of small, acid-soluble proteins during spore germination. This is Germination protease from Bacillus velezensis (strain DSM 23117 / BGSC 10A6 / LMG 26770 / FZB42) (Bacillus amyloliquefaciens subsp. plantarum).